Reading from the N-terminus, the 160-residue chain is SUMO-conjugating enzyme SCE1 (160 aa).

Ala2 is subject to N-acetylalanine. A UBC core domain is found at Ile5–Ala158. The active-site Glycyl thioester intermediate is the Cys94.

Belongs to the ubiquitin-conjugating enzyme family. In terms of assembly, interacts with SIZ1 (via PHD domain) and MMS21. Interacts with TCP14 and TCP15. Interacts with KIN10.

It participates in protein modification; protein sumoylation. SUMO-conjugating enzyme that accepts the SUMO proteins from the E1 SUMO-activating heterodimer SAE1/SAE2 and catalyzes its covalent attachment to other proteins with the E3 SUMO ligases SIZ1 and MMS21. Associates with SIZ1 for sumoylation of the transcription factor GTE3. This Arabidopsis thaliana (Mouse-ear cress) protein is SUMO-conjugating enzyme SCE1 (SCE1).